Consider the following 682-residue polypeptide: Glutamine--fructose-6-phosphate aminotransferase [isomerizing] 2 (682 aa).

Catalysis depends on Cys2, which acts as the For GATase activity. Residues 2–288 (CGIFAYMNYR…DDDIAAVADG (287 aa)) form the Glutamine amidotransferase type-2 domain. Ser244 is subject to Phosphoserine. 2 SIS domains span residues 360 to 499 (HLKE…DRIS) and 531 to 672 (LALE…VDFP). Substrate is bound by residues 377-378 (TS), 422-424 (SQS), Thr427, and His578.

It carries out the reaction D-fructose 6-phosphate + L-glutamine = D-glucosamine 6-phosphate + L-glutamate. Its pathway is nucleotide-sugar biosynthesis; UDP-N-acetyl-alpha-D-glucosamine biosynthesis; alpha-D-glucosamine 6-phosphate from D-fructose 6-phosphate: step 1/1. In terms of biological role, controls the flux of glucose into the hexosamine pathway. Most likely involved in regulating the availability of precursors for N- and O-linked glycosylation of proteins. This Bos taurus (Bovine) protein is Glutamine--fructose-6-phosphate aminotransferase [isomerizing] 2 (GFPT2).